Consider the following 552-residue polypeptide: Urocanate hydratase (552 aa).

NAD(+)-binding positions include 49-50 (GG), Gln127, 173-175 (GMG), Asp193, 239-240 (NA), 260-264 (QTSAH), 270-271 (YI), and Tyr319. Cys407 is a catalytic residue. Gly489 contacts NAD(+).

Belongs to the urocanase family. NAD(+) serves as cofactor.

Its subcellular location is the cytoplasm. The catalysed reaction is 4-imidazolone-5-propanoate = trans-urocanate + H2O. It functions in the pathway amino-acid degradation; L-histidine degradation into L-glutamate; N-formimidoyl-L-glutamate from L-histidine: step 2/3. Catalyzes the conversion of urocanate to 4-imidazolone-5-propionate. The chain is Urocanate hydratase from Bacillus cereus (strain ATCC 10987 / NRS 248).